The following is a 554-amino-acid chain: DNA ligase (554 aa).

E253 lines the ATP pocket. Catalysis depends on K255, which acts as the N6-AMP-lysine intermediate. Positions 260, 275, 304, 344, 418, and 424 each coordinate ATP.

It belongs to the ATP-dependent DNA ligase family. Mg(2+) is required as a cofactor.

The enzyme catalyses ATP + (deoxyribonucleotide)n-3'-hydroxyl + 5'-phospho-(deoxyribonucleotide)m = (deoxyribonucleotide)n+m + AMP + diphosphate.. In terms of biological role, DNA ligase that seals nicks in double-stranded DNA during DNA replication, DNA recombination and DNA repair. This Haloarcula marismortui (strain ATCC 43049 / DSM 3752 / JCM 8966 / VKM B-1809) (Halobacterium marismortui) protein is DNA ligase.